A 360-amino-acid polypeptide reads, in one-letter code: Probable neutral protease 2 homolog MCYG_04257 (360 aa).

The first 17 residues, 1–17 (MQLIAFLAALGVPVAFA), serve as a signal peptide directing secretion. A propeptide spanning residues 18–182 (ATIPSVPLNH…KVKAGSIDKR (165 aa)) is cleaved from the precursor. Cysteines 190 and 261 form a disulfide. A glycan (N-linked (GlcNAc...) asparagine) is linked at Asn262. 2 cysteine pairs are disulfide-bonded: Cys268–Cys286 and Cys300–Cys360. Residue His311 participates in Zn(2+) binding. Glu312 is an active-site residue. Zn(2+) is bound by residues His315 and Asp326.

The protein belongs to the peptidase M35 family. Zn(2+) serves as cofactor.

It localises to the secreted. It carries out the reaction Preferential cleavage of bonds with hydrophobic residues in P1'. Also 3-Asn-|-Gln-4 and 8-Gly-|-Ser-9 bonds in insulin B chain.. Probable secreted metalloprotease that shows high activities on basic nuclear substrates such as histone and protamine. May be involved in virulence. This Arthroderma otae (strain ATCC MYA-4605 / CBS 113480) (Microsporum canis) protein is Probable neutral protease 2 homolog MCYG_04257.